We begin with the raw amino-acid sequence, 1158 residues long: MGLKIIYGRAGTGKSTFCINQIKKKINNSPNNKLILLVPEQFTFQTENKVLSAIGERYVLNAEVLSFKRLAHNVFNECGGATRTIMGDAGKSMLIFKVLEDLGDNMTVFKNASRQKGFIDIASKTITEFKKYNVNNEVLDLTINEIEDENLKMKMEELKDVFNEFNSRLHEGYVDEEDQLLLLNEKLDGCSLYDGAEIWIDEFSSFTPNQLSVIGKLLKRAKSVNITLSIDEVNSLKGESDLFVATKNTEKRLMNLIQEEGIAFSGYINLNEDIPYRFKENKELAHIERQLYAYPFKQYRGKNNSLRLYRANNNYDEIEFVAKDILRLVREKQYRFKDISVICRDVDNYEKVVSAIFSEYEIPYYIDKKIDIASNPLIVFINSAVDIISKNWTYESMFKYLKTGLIKEFRGIEGAELIDELENYVLAYGIKGKKWMEEWVNYSSSILKEEEISEENKQRLERLNDIRETIVTPLDEFNKQCKGKKTLKEFATILYEFLDSKLDIMDTLDKYVDYFKENDMAIEAKEYSEVRDIFIDVLEQAVDVLGNEVMDLNEFMKVLNIGLSQYEMGLIPVALDQVNIGDITRIKSRGTKALYIIGVNDGVLPSASKEEGILSDNDREILLEKGISLASDTRTKIFEEQFLVYTAFTIAEEYLVVTYPLADFEGKSQRPSIIVHRLKKILPNVKEESEGFKLVDDKYEKISAKIPTLNELMIAIRKNYDGAEIEDYWKYVYDWYLREPKWKERIEYVRKGLEYTNLENNISKEKAKKLYEDNKNKISLSVSRLERYAQCPFAYYIQYGLKAKDRKIYEFTAPDLGSFMHEILDEFTNEIKEKDLKWSDLSKENCRNIINSLVDNQVKNNKSSILNSSKRYSYFTDRFKRILTKSVMVISEQMKRSDFEIYKNELAFGFSKDVNSIKLDLPSGESFYLNGRIDRVDKLNLDGETYLRIIDYKTGSKKFDLNKFYNGLQMQLLVYLDALINNSENIVENQAMPGAILYFRIDDPILKSKGDLTEEEIKSEVLKELKLEGLLLDDVKVVKAMDNTLEPGTHSLIIPANMKKAGDLGKNKALITMEQFELLRKYVNEKMVEICQNMIEGKIDIEPCKENKNIVCDYCNYSHICQFDSSLEDNRYKVIPKKKDEDIWKSINEKVGGEVNGD.

An ATP-binding site is contributed by 8-15 (GRAGTGKS). Positions 791, 1112, 1115, and 1121 each coordinate [4Fe-4S] cluster.

It belongs to the helicase family. AddB/RexB type 1 subfamily. Heterodimer of AddA and AddB. It depends on Mg(2+) as a cofactor. [4Fe-4S] cluster is required as a cofactor.

Its function is as follows. The heterodimer acts as both an ATP-dependent DNA helicase and an ATP-dependent, dual-direction single-stranded exonuclease. Recognizes the chi site generating a DNA molecule suitable for the initiation of homologous recombination. The AddB subunit has 5' -&gt; 3' nuclease activity but not helicase activity. The protein is ATP-dependent helicase/deoxyribonuclease subunit B of Clostridium perfringens (strain 13 / Type A).